A 244-amino-acid polypeptide reads, in one-letter code: Lipoprotein-releasing system ATP-binding protein LolD (244 aa).

The ABC transporter domain occupies 19-244 (IRAEALAKTY…KLRELAPSAV (226 aa)). An ATP-binding site is contributed by 55–62 (GASGAGKS).

It belongs to the ABC transporter superfamily. Lipoprotein translocase (TC 3.A.1.125) family. The complex is composed of two ATP-binding proteins (LolD) and two transmembrane proteins (LolC and LolE).

It localises to the cell inner membrane. Functionally, part of the ABC transporter complex LolCDE involved in the translocation of mature outer membrane-directed lipoproteins, from the inner membrane to the periplasmic chaperone, LolA. Responsible for the formation of the LolA-lipoprotein complex in an ATP-dependent manner. In Xanthomonas euvesicatoria pv. vesicatoria (strain 85-10) (Xanthomonas campestris pv. vesicatoria), this protein is Lipoprotein-releasing system ATP-binding protein LolD.